Here is an 885-residue protein sequence, read N- to C-terminus: Leucine--tRNA ligase (885 aa).

The 'HIGH' region motif lies at 43-53 (PYTSGQLHMGH). The 'KMSKS' region signature appears at 571–575 (KMSKS). Residue Lys-574 coordinates ATP. The segment at 866-885 (SVANKAEPGRPAIHVDEADD) is disordered.

This sequence belongs to the class-I aminoacyl-tRNA synthetase family.

The protein resides in the cytoplasm. The enzyme catalyses tRNA(Leu) + L-leucine + ATP = L-leucyl-tRNA(Leu) + AMP + diphosphate. In Halobacterium salinarum (strain ATCC 700922 / JCM 11081 / NRC-1) (Halobacterium halobium), this protein is Leucine--tRNA ligase.